The sequence spans 368 residues: Ankyrin repeat domain-containing protein 40 (368 aa).

Met1 is modified (N-acetylmethionine). 2 ANK repeats span residues 9–38 and 43–72; these read EQQERLREAAALGDIREVQKLVESGVDVNS and NGWTCLHWACKRNHGQVVSYLLKSGADKEI. 3 disordered regions span residues 93-115, 139-176, and 196-238; these read MGVEEEDDDDDDDDNLPQLKKES, DSAQMQNGGPSTPPASPPADGSPPLLPPGEPPLLGTFP, and ILRT…NGTY. Residues 95–107 show a composition bias toward acidic residues; it reads VEEEDDDDDDDDN. The segment covering 149 to 169 has biased composition (pro residues); the sequence is STPPASPPADGSPPLLPPGEP. The segment covering 212–224 has biased composition (polar residues); sequence PVSQSRSLFSSVP.

The sequence is that of Ankyrin repeat domain-containing protein 40 (ANKRD40) from Homo sapiens (Human).